Consider the following 176-residue polypeptide: Inorganic pyrophosphatase (176 aa).

3 residues coordinate substrate: Lys-30, Arg-44, and Tyr-56. Mg(2+) contacts are provided by Asp-66, Asp-71, and Asp-103. Tyr-142 provides a ligand contact to substrate.

Belongs to the PPase family. In terms of assembly, homohexamer. Mg(2+) is required as a cofactor.

The protein localises to the cytoplasm. It carries out the reaction diphosphate + H2O = 2 phosphate + H(+). Catalyzes the hydrolysis of inorganic pyrophosphate (PPi) forming two phosphate ions. The chain is Inorganic pyrophosphatase from Aeropyrum pernix (strain ATCC 700893 / DSM 11879 / JCM 9820 / NBRC 100138 / K1).